A 206-amino-acid polypeptide reads, in one-letter code: High frequency lysogenization protein HflD homolog (206 aa).

The protein belongs to the HflD family.

Its subcellular location is the cytoplasm. The protein localises to the cell inner membrane. This Marinobacter nauticus (strain ATCC 700491 / DSM 11845 / VT8) (Marinobacter aquaeolei) protein is High frequency lysogenization protein HflD homolog.